We begin with the raw amino-acid sequence, 210 residues long: MRDPVETYMNLVPMVVEQTNRGERAYDIFSRLLKERIIFVTGPVEDGMATLIVAQLLFLEAENPKKEIAMYINSPGGVVTSGLAIYDTMQFIRPAVSTLCTGQAASMGSLLLCAGHKDMRFSLPNSRIMVHQPSGGFQGQATDIMLHAQEILSLKKRLNEIYVKHTGQSYKAIEDALERDKFLTAEAAAEFGLIDKVIDKRPEDPAPMAK.

The active-site Nucleophile is the Ser106. The active site involves His131.

Belongs to the peptidase S14 family. In terms of assembly, fourteen ClpP subunits assemble into 2 heptameric rings which stack back to back to give a disk-like structure with a central cavity, resembling the structure of eukaryotic proteasomes.

The protein localises to the cytoplasm. The catalysed reaction is Hydrolysis of proteins to small peptides in the presence of ATP and magnesium. alpha-casein is the usual test substrate. In the absence of ATP, only oligopeptides shorter than five residues are hydrolyzed (such as succinyl-Leu-Tyr-|-NHMec, and Leu-Tyr-Leu-|-Tyr-Trp, in which cleavage of the -Tyr-|-Leu- and -Tyr-|-Trp bonds also occurs).. In terms of biological role, cleaves peptides in various proteins in a process that requires ATP hydrolysis. Has a chymotrypsin-like activity. Plays a major role in the degradation of misfolded proteins. The polypeptide is ATP-dependent Clp protease proteolytic subunit (Bradyrhizobium sp. (strain BTAi1 / ATCC BAA-1182)).